A 357-amino-acid chain; its full sequence is MSLTRLLIKDFRNIENADLALSPGFNFLVGANGSGKTSVLEAIYTLGHGRAFRSLQPGRVIRHEQEAFVLHGRLQGEERETSIGLTKDKQGDSKVRIDGTDGHKIAELAHLMPMQLITPEGFTLLNGGPKYRRAFLDWGCFHNEVGFFTAWSNLKRLLKQRNAALRQVSRYEQLRPWDKELIPLAEQISTWRAEYSSAIAQDMADTCQQFLPEFSLTFSFQRGWEKETDYADVLERSFERDRMLTYTAHGPHKADFRIRADGAPVEDTLSRGQLKLLMCALRLAQGEFLTRESGRRCLYLIDDFASELDDARRGLLASRLKATQSQVFVSAISAEHVIDMSDENSKMFTVEKGKITD.

Glycine 30–threonine 37 is an ATP binding site.

This sequence belongs to the RecF family.

Its subcellular location is the cytoplasm. The RecF protein is involved in DNA metabolism; it is required for DNA replication and normal SOS inducibility. RecF binds preferentially to single-stranded, linear DNA. It also seems to bind ATP. This chain is DNA replication and repair protein RecF, found in Salmonella paratyphi B (strain ATCC BAA-1250 / SPB7).